The chain runs to 308 residues: Glutamyl-Q tRNA(Asp) synthetase (308 aa).

L-glutamate-binding positions include Arg-19–Ser-23 and Glu-55. The short motif at Pro-22 to Ser-32 is the 'HIGH' region element. 4 residues coordinate Zn(2+): Cys-111, Cys-113, Tyr-125, and Cys-129. Positions 182 and 200 each coordinate L-glutamate. The 'KMSKS' region motif lies at Lys-238–Gln-242. Lys-241 provides a ligand contact to ATP.

Belongs to the class-I aminoacyl-tRNA synthetase family. GluQ subfamily. Zn(2+) is required as a cofactor.

In terms of biological role, catalyzes the tRNA-independent activation of glutamate in presence of ATP and the subsequent transfer of glutamate onto a tRNA(Asp). Glutamate is transferred on the 2-amino-5-(4,5-dihydroxy-2-cyclopenten-1-yl) moiety of the queuosine in the wobble position of the QUC anticodon. The chain is Glutamyl-Q tRNA(Asp) synthetase from Escherichia coli O157:H7.